A 228-amino-acid chain; its full sequence is MNLKETELCLGLPGGTETVESPAKSGVGNKRGFSETVDLKLNLQSNKQGHVDLNTNGAPKEKTFLKDPSKPPAKAQVVGWPPVRNYRKNVMANQKSGEAEEAMSSGGGTVAFVKVSMDGAPYLRKVDLKMYTSYKDLSDALAKMFSSFTMGSYGAQGMIDFMNESKVMDLLNSSEYVPSYEDKDGDWMLVGDVPWPMFVESCKRLRIMKGSEAIGLAPRAMEKFKNRS.

The short motif at leucine 8–leucine 12 is the EAR-like (transcriptional repression) element. In terms of domain architecture, PB1 spans valine 110–glycine 210.

Belongs to the Aux/IAA family. In terms of assembly, homodimers and heterodimers. Interacts with TPL. In terms of tissue distribution, preferentially expressed in roots and flowers.

It localises to the nucleus. Aux/IAA proteins are short-lived transcriptional factors that function as repressors of early auxin response genes at low auxin concentrations. Repression is thought to result from the interaction with auxin response factors (ARFs), proteins that bind to the auxin-responsive promoter element (AuxRE). Formation of heterodimers with ARF proteins may alter their ability to modulate early auxin response genes expression. The chain is Auxin-responsive protein IAA14 (IAA14) from Arabidopsis thaliana (Mouse-ear cress).